The following is a 1031-amino-acid chain: Receptor-like protein EIX1 (1031 aa).

A signal peptide spans 1–29; sequence MDKWKYARLAQFLFTLSLLFLETSFGLGG. The N-linked (GlcNAc...) asparagine glycan is linked to Asn-30. Residues 30–113 form an N-cap region; that stretch reads NKTLCLDKER…PRLTGKLSPS (84 aa). The Extracellular portion of the chain corresponds to 30 to 971; the sequence is NKTLCLDKER…DEEEEFPSLE (942 aa). An LRR 1 repeat occupies 117–140; sequence LEYLNYLDLSVNEFERSEIPRFIG. The stretch at 142–165 is one LRR 2; degenerate repeat; that stretch reads LKRLEYLNLSASFFSGVIPIQFQN. Residues Asn-149 and Asn-165 are each glycosylated (N-linked (GlcNAc...) asparagine). LRR repeat units follow at residues 166–189, 191–215, 216–240, and 243–266; these read LTSL…WLSH, SSLE…ITKV, PSLK…DLAN, and LISL…SWVF. Asn-240 carries an N-linked (GlcNAc...) asparagine glycan. N-linked (GlcNAc...) asparagine glycosylation is present at Asn-267. LRR repeat units follow at residues 269-292, 293-317, 318-341, 346-369, 370-393, 394-416, 417-440, 441-463, 465-487, 488-509, 512-536, 538-559, 561-584, and 586-611; these read TTSL…RFGT, LMYL…SFGN, LTRL…LFLR, RKSL…ATRF, SSLK…AGQV, STLE…LALF, PSLR…IGKL, SQLR…MGQL, NLES…HLSN, LSSL…SFNW, PFQL…LQNQ, NYTV…WFSS, PPDL…LIEN, and YGYR…NVQI. A glycan (N-linked (GlcNAc...) asparagine) is linked at Asn-317. 2 N-linked (GlcNAc...) asparagine glycosylation sites follow: Asn-365 and Asn-383. Asn-487 carries an N-linked (GlcNAc...) asparagine glycan. N-linked (GlcNAc...) asparagine glycans are attached at residues Asn-538, Asn-568, and Asn-597. An LRR 21; degenerate repeat occupies 612-629; the sequence is FYLHKNQFFGSISSICRS. 6 LRR repeats span residues 630–654, 655–678, 679–703, 705–725, 726–750, and 752–773; these read RTSP…WMNM, TSLA…LGSL, TNLK…QCQG, QILD…IGTD, LLNL…ICQL, and FLQI…CFNN. 2 N-linked (GlcNAc...) asparagine glycosylation sites follow: Asn-653 and Asn-666. Asn-773 and Asn-781 each carry an N-linked (GlcNAc...) asparagine glycan. LRR repeat units lie at residues 823-847, 848-871, 872-895, and 896-918; these read LLYL…IADM, RGLK…IGQM, RMLE…LANL, and TFLS…STQL. N-linked (GlcNAc...) asparagine glycans are attached at residues Asn-854, Asn-861, and Asn-894. Residues 919–971 form a C-cap/acidic domain region; the sequence is QSFDRSSYSDNAQLCGPPLQECPGYAPPSPLIDHGSNNNPQEHDEEEEFPSLE. The chain crosses the membrane as a helical span at residues 972 to 992; that stretch reads FYISMVLSFFVAFWGILGCLI. Residues 993 to 1031 are Cytoplasmic-facing; it reads VNSSWRNAYFKFLTDTTSWLDMISRVWFARLKKKLRRAR.

Belongs to the RLP family. In terms of assembly, interacts with EIX elicitor protein.

The protein localises to the cell membrane. Involved in plant defense. Confers resistance to the fungal pathogen T.viride through recognition of the EIX elicitor protein. This Solanum lycopersicum (Tomato) protein is Receptor-like protein EIX1.